The sequence spans 285 residues: Ribosomal RNA large subunit methyltransferase F (285 aa).

The protein belongs to the methyltransferase superfamily. METTL16/RlmF family.

It is found in the cytoplasm. The enzyme catalyses adenosine(1618) in 23S rRNA + S-adenosyl-L-methionine = N(6)-methyladenosine(1618) in 23S rRNA + S-adenosyl-L-homocysteine + H(+). Its function is as follows. Specifically methylates the adenine in position 1618 of 23S rRNA. The protein is Ribosomal RNA large subunit methyltransferase F of Christiangramia forsetii (strain DSM 17595 / CGMCC 1.15422 / KT0803) (Gramella forsetii).